A 108-amino-acid chain; its full sequence is UPF0145 protein LACR_1006 (108 aa).

This sequence belongs to the UPF0145 family.

The chain is UPF0145 protein LACR_1006 from Lactococcus lactis subsp. cremoris (strain SK11).